Reading from the N-terminus, the 146-residue chain is 3-hydroxyacyl-[acyl-carrier-protein] dehydratase FabZ (146 aa).

The active site involves histidine 49.

It belongs to the thioester dehydratase family. FabZ subfamily.

The protein localises to the cytoplasm. The enzyme catalyses a (3R)-hydroxyacyl-[ACP] = a (2E)-enoyl-[ACP] + H2O. In terms of biological role, involved in unsaturated fatty acids biosynthesis. Catalyzes the dehydration of short chain beta-hydroxyacyl-ACPs and long chain saturated and unsaturated beta-hydroxyacyl-ACPs. This is 3-hydroxyacyl-[acyl-carrier-protein] dehydratase FabZ from Pseudomonas syringae pv. tomato (strain ATCC BAA-871 / DC3000).